Here is an 806-residue protein sequence, read N- to C-terminus: Lon protease (806 aa).

One can recognise a Lon N-terminal domain in the interval 13–206 (LPMMPIRDVV…RVAEMLDIEI (194 aa)). 356–363 (GPPGVGKT) serves as a coordination point for ATP. A Lon proteolytic domain is found at 599–780 (KNEIGAATGL…DEVLKIALER (182 aa)). Residues serine 686 and lysine 729 contribute to the active site.

This sequence belongs to the peptidase S16 family. Homohexamer. Organized in a ring with a central cavity.

It localises to the cytoplasm. It catalyses the reaction Hydrolysis of proteins in presence of ATP.. In terms of biological role, ATP-dependent serine protease that mediates the selective degradation of mutant and abnormal proteins as well as certain short-lived regulatory proteins. Required for cellular homeostasis and for survival from DNA damage and developmental changes induced by stress. Degrades polypeptides processively to yield small peptide fragments that are 5 to 10 amino acids long. Binds to DNA in a double-stranded, site-specific manner. The sequence is that of Lon protease from Solibacter usitatus (strain Ellin6076).